Reading from the N-terminus, the 390-residue chain is Transposase for insertion sequence element IS256 in transposon Tn4001 (390 aa).

It belongs to the transposase mutator family.

Its function is as follows. Required for the transposition of the insertion element. This Enterococcus faecalis (strain ATCC 700802 / V583) protein is Transposase for insertion sequence element IS256 in transposon Tn4001.